The following is a 221-amino-acid chain: UPF0502 protein Sputcn32_1644 (221 aa).

Belongs to the UPF0502 family.

This Shewanella putrefaciens (strain CN-32 / ATCC BAA-453) protein is UPF0502 protein Sputcn32_1644.